Reading from the N-terminus, the 262-residue chain is 3-methyl-2-oxobutanoate hydroxymethyltransferase (262 aa).

Residues D44 and D83 each contribute to the Mg(2+) site. 3-methyl-2-oxobutanoate is bound by residues 44–45 (DS), D83, and K112. Position 114 (E114) interacts with Mg(2+). Residue E180 is the Proton acceptor of the active site.

It belongs to the PanB family. As to quaternary structure, homodecamer; pentamer of dimers. The cofactor is Mg(2+).

Its subcellular location is the cytoplasm. The catalysed reaction is 3-methyl-2-oxobutanoate + (6R)-5,10-methylene-5,6,7,8-tetrahydrofolate + H2O = 2-dehydropantoate + (6S)-5,6,7,8-tetrahydrofolate. It participates in cofactor biosynthesis; (R)-pantothenate biosynthesis; (R)-pantoate from 3-methyl-2-oxobutanoate: step 1/2. Its function is as follows. Catalyzes the reversible reaction in which hydroxymethyl group from 5,10-methylenetetrahydrofolate is transferred onto alpha-ketoisovalerate to form ketopantoate. The protein is 3-methyl-2-oxobutanoate hydroxymethyltransferase of Chromobacterium violaceum (strain ATCC 12472 / DSM 30191 / JCM 1249 / CCUG 213 / NBRC 12614 / NCIMB 9131 / NCTC 9757 / MK).